We begin with the raw amino-acid sequence, 283 residues long: MIRKAVIPVAGFGTRLLPITKAQPKEMLPVVNKPIVQYVVEDLVEAGVKDILFVTGKGKQAIENHFDVNYELECKLEKSGKYELLKIIKEIDRLGNIFYVRQKEQKGLGDAILYGEEFVGEEYFIAMVGDTIYSKNIVKDLIKAHEKYGCSVIALERVPKEDVYKYGVIDGEEIEKGVYKIKNMVEKPKVEEAPSNLIITGAYLLSPKIFEKIRETPPGRGGEIQITDAMNLLLKEEDIIGVEINCKRYDIGDALGWLKANVEIGAERFPEFREFLKEFVKNL.

It belongs to the UDPGP type 2 family.

The enzyme catalyses alpha-D-glucose 1-phosphate + UTP + H(+) = UDP-alpha-D-glucose + diphosphate. This chain is Putative UTP--glucose-1-phosphate uridylyltransferase, found in Methanocaldococcus jannaschii (strain ATCC 43067 / DSM 2661 / JAL-1 / JCM 10045 / NBRC 100440) (Methanococcus jannaschii).